The sequence spans 387 residues: Putative actin-29 (387 aa).

Belongs to the actin family.

It is found in the cytoplasm. Its subcellular location is the cytoskeleton. It catalyses the reaction ATP + H2O = ADP + phosphate + H(+). Its function is as follows. Actins are highly conserved proteins that are involved in various types of cell motility and are ubiquitously expressed in all eukaryotic cells. Multiple isoforms are involved in various cellular functions such as cytoskeleton structure, cell mobility, chromosome movement and muscle contraction. In Dictyostelium discoideum (Social amoeba), this protein is Putative actin-29 (act29).